The primary structure comprises 101 residues: uncharacterized protein (101 aa).

Helical transmembrane passes span 3–23 and 68–88; these read IIGS…AIIF and VIVL…IIVI.

It is found in the cell membrane. This is an uncharacterized protein from Ureaplasma parvum serovar 3 (strain ATCC 700970).